Here is a 69-residue protein sequence, read N- to C-terminus: Putative membrane protein insertion efficiency factor (69 aa).

This sequence belongs to the UPF0161 family.

It localises to the cell membrane. In terms of biological role, could be involved in insertion of integral membrane proteins into the membrane. This is Putative membrane protein insertion efficiency factor from Clostridium beijerinckii (strain ATCC 51743 / NCIMB 8052) (Clostridium acetobutylicum).